A 292-amino-acid polypeptide reads, in one-letter code: Diaminopimelate epimerase (292 aa).

Residues Asn-14 and Asn-81 each contribute to the substrate site. The active-site Proton donor is the Cys-90. Substrate is bound by residues 91–92, Asn-166, Asn-202, and 220–221; these read GN and ER. Cys-229 functions as the Proton acceptor in the catalytic mechanism. 230-231 lines the substrate pocket; sequence GT.

It belongs to the diaminopimelate epimerase family. Homodimer.

It localises to the cytoplasm. It carries out the reaction (2S,6S)-2,6-diaminopimelate = meso-2,6-diaminopimelate. The protein operates within amino-acid biosynthesis; L-lysine biosynthesis via DAP pathway; DL-2,6-diaminopimelate from LL-2,6-diaminopimelate: step 1/1. Its function is as follows. Catalyzes the stereoinversion of LL-2,6-diaminopimelate (L,L-DAP) to meso-diaminopimelate (meso-DAP), a precursor of L-lysine and an essential component of the bacterial peptidoglycan. In Rhodococcus erythropolis (strain PR4 / NBRC 100887), this protein is Diaminopimelate epimerase.